We begin with the raw amino-acid sequence, 800 residues long: Integrin beta-5 (800 aa).

A signal peptide spans Met-1–Gly-24. Topologically, residues Leu-25–Met-722 are extracellular. The 50-residue stretch at Ile-27–Gly-76 folds into the PSI domain. Intrachain disulfides connect Cys-28–Cys-46, Cys-36–Cys-463, Cys-39–Cys-64, Cys-49–Cys-75, Cys-202–Cys-211, Cys-259–Cys-300, Cys-401–Cys-413, Cys-433–Cys-461, Cys-465–Cys-484, Cys-476–Cys-487, Cys-489–Cys-498, Cys-500–Cys-530, Cys-513–Cys-528, Cys-522–Cys-533, Cys-535–Cys-548, Cys-550–Cys-571, Cys-555–Cys-569, Cys-563–Cys-574, and Cys-576–Cys-585. The VWFA domain occupies Tyr-136–Ile-378. Residues Ser-147 and Ser-149 each coordinate Mg(2+). Positions 149, 152, 153, and 184 each coordinate Ca(2+). Ca(2+) is bound by residues Asn-242, Asp-244, Pro-246, and Glu-247. A Mg(2+)-binding site is contributed by Glu-247. Asn-347 is a glycosylation site (N-linked (GlcNAc...) asparagine). Position 362 (Gly-362) interacts with Ca(2+). I-EGF domains lie at Cys-465 to Glu-499, Cys-500 to Glu-549, Cys-550 to Asn-586, and Cys-587 to Glu-626. Residue Asn-479 is glycosylated (N-linked (GlcNAc...) asparagine). N-linked (GlcNAc...) asparagine glycosylation occurs at Asn-552. The N-linked (GlcNAc...) asparagine glycan is linked to Asn-586. Disulfide bonds link Cys-587–Cys-610, Cys-594–Cys-608, Cys-602–Cys-613, Cys-615–Cys-625, Cys-628–Cys-631, Cys-635–Cys-683, Cys-641–Cys-662, Cys-644–Cys-658, and Cys-691–Cys-715. N-linked (GlcNAc...) asparagine glycans are attached at residues Asn-655 and Asn-706. The helical transmembrane segment at Thr-723–Trp-743 threads the bilayer. Residues Lys-744–Asp-800 lie on the Cytoplasmic side of the membrane. Residue Ser-771 is modified to Phosphoserine.

This sequence belongs to the integrin beta chain family. In terms of assembly, heterodimer of an alpha and a beta subunit. Beta-5 (ITGB5) associates with alpha-V (ITGAV). Interacts with MYO10. Interacts with DAB2. Integrin ITGAV:ITGB5 interacts with FBLN5 (via N-terminus). ITGAV:ITGB5 interacts with CCN3. Interacts with tensin TNS3; TNS3 also interacts with PEAK1, thus acting as an adapter molecule to bridge the association of PEAK1 with ITGB5.

The protein localises to the cell membrane. Functionally, integrin alpha-V/beta-5 (ITGAV:ITGB5) is a receptor for fibronectin. It recognizes the sequence R-G-D in its ligand. The sequence is that of Integrin beta-5 (ITGB5) from Bos taurus (Bovine).